Here is a 226-residue protein sequence, read N- to C-terminus: Endonuclease V (226 aa).

Residues D43 and D109 each coordinate Mg(2+).

It belongs to the endonuclease V family. Mg(2+) serves as cofactor.

It is found in the cytoplasm. The enzyme catalyses Endonucleolytic cleavage at apurinic or apyrimidinic sites to products with a 5'-phosphate.. DNA repair enzyme involved in the repair of deaminated bases. Selectively cleaves double-stranded DNA at the second phosphodiester bond 3' to a deoxyinosine leaving behind the intact lesion on the nicked DNA. The polypeptide is Endonuclease V (Kosmotoga olearia (strain ATCC BAA-1733 / DSM 21960 / TBF 19.5.1)).